The following is a 249-amino-acid chain: tRNA 2'-phosphotransferase 1 (249 aa).

Position 1 is an N-acetylmethionine (Met1). 2 disordered regions span residues 1–25 (MNAP…RNVQ) and 220–249 (KPLS…KIQQ).

The protein belongs to the KptA/TPT1 family.

The enzyme catalyses 2'-phospho-[ligated tRNA] + NAD(+) = mature tRNA + ADP-alpha-D-ribose 1'',2''-cyclic phosphate + nicotinamide. In terms of biological role, catalyzes the last step of tRNA splicing, the transfer of the splice junction 2'-phosphate from ligated tRNA to NAD to produce ADP-ribose 1''-2'' cyclic phosphate. The protein is tRNA 2'-phosphotransferase 1 (Trpt1) of Mus musculus (Mouse).